Consider the following 410-residue polypeptide: Succinyl-CoA:(R)-benzylsuccinate CoA-transferase subunit BbsE (410 aa).

Belongs to the CoA-transferase III family. Heterotetramer composed of 2 BbsE subunits and 2 BbsF subunits.

The catalysed reaction is (R)-2-benzylsuccinate + succinyl-CoA = (R)-2-benzylsuccinyl-CoA + succinate. The protein operates within xenobiotic degradation; toluene degradation. Inhibited by (S)-benzylsuccinyl-CoA. Catalyzes the reversible conversion of (R)-2-benzylsuccinate to (R)-2-benzylsuccinyl-CoA. Inactive with (S)-benzylsuccinate. In Thauera aromatica, this protein is Succinyl-CoA:(R)-benzylsuccinate CoA-transferase subunit BbsE (bbsE).